The following is a 63-amino-acid chain: Large ribosomal subunit protein eL37 (63 aa).

The Zn(2+) site is built by Cys20, Cys23, Cys35, and Cys38. Residues 20–38 form a C4-type zinc finger; sequence CRRCGRRAFNVKKGYCAAC.

Belongs to the eukaryotic ribosomal protein eL37 family. As to quaternary structure, part of the 50S ribosomal subunit. Zn(2+) serves as cofactor.

Binds to the 23S rRNA. The polypeptide is Large ribosomal subunit protein eL37 (Thermococcus kodakarensis (strain ATCC BAA-918 / JCM 12380 / KOD1) (Pyrococcus kodakaraensis (strain KOD1))).